Consider the following 489-residue polypeptide: 5-hydroxytryptamine receptor 3A (489 aa).

The signal sequence occupies residues 1-23; the sequence is MRLCIPQVLLALFLSMLTAPGEG. Residues 24-246 are Extracellular-facing; sequence SRRRATQARD…MKFYVIIRRR (223 aa). Residues Asn109, Asn175, and Asn191 are each glycosylated (N-linked (GlcNAc...) asparagine). Cys162 and Cys176 are disulfide-bonded. Residues 247–273 traverse the membrane as a helical segment; the sequence is PLFYAVSLLLPSIFLMVVDIVGFCLPP. The Cytoplasmic segment spans residues 274–278; the sequence is DSGER. A helical transmembrane segment spans residues 279–297; it reads VSFKITLLLGYSVFLIIVS. Over 298–307 the chain is Extracellular; that stretch reads DTLPATAIGT. A helical membrane pass occupies residues 308–326; it reads PLIGVYFVVCMALLVISLA. Residues 327 to 466 lie on the Cytoplasmic side of the membrane; that stretch reads ETIFIVRLVH…GYVLDRLLFR (140 aa). The HA-stretch; determines single-channel conductance in 5-HT3 receptors stretch occupies residues 425–461; sequence AVRGLLQELSSIRHFLEKRDEMREVARDWLRVGYVLD. Residues 467–486 traverse the membrane as a helical segment; it reads IYLLAVLAYSITLVTLWSIW. Topologically, residues 487-489 are extracellular; sequence HYS.

It belongs to the ligand-gated ion channel (TC 1.A.9) family. 5-hydroxytryptamine receptor (TC 1.A.9.2) subfamily. HTR3A sub-subfamily. In terms of assembly, forms homopentameric as well as heteropentameric serotonin-activated cation-selective channel complexes with HTR3B or HTR3C or HTR3D or HTR3E. The homomeric complex is functional but exhibits low conductance with modified voltage dependence, and decreased agonist and antagonist affinity. Heteropentameric complexes display properties which resemble that of neuronal serotonin-activated channels in vivo. Interacts with RIC3. In terms of tissue distribution, brain, spinal cord, and heart.

It is found in the postsynaptic cell membrane. Its subcellular location is the cell membrane. It catalyses the reaction Na(+)(in) = Na(+)(out). The catalysed reaction is K(+)(in) = K(+)(out). It carries out the reaction Ca(2+)(in) = Ca(2+)(out). The enzyme catalyses Mg(2+)(in) = Mg(2+)(out). Forms serotonin (5-hydroxytryptamine/5-HT3)-activated cation-selective channel complexes, which when activated cause fast, depolarizing responses in neurons. The protein is 5-hydroxytryptamine receptor 3A of Mus musculus (Mouse).